We begin with the raw amino-acid sequence, 526 residues long: Glutamate--tRNA ligase, mitochondrial (526 aa).

The transit peptide at 1 to 38 directs the protein to the mitochondrion; that stretch reads MLSYTSCAKLICSRYIVSKISFYSLKRCNSTAVVRTRF. Residue 37 to 39 coordinates L-glutamate; it reads RFA. The 'HIGH' region signature appears at 42–50; that stretch reads PTGFLHLGS. An ATP-binding site is contributed by His-47. Residues Glu-73, 222–226, and Arg-240 contribute to the L-glutamate site; that span reads YHFAN. ATP-binding positions include Glu-243 and 278-282; that span reads KLSKR. Positions 278 to 282 match the 'KMSKS' region motif; that stretch reads KLSKR.

This sequence belongs to the class-I aminoacyl-tRNA synthetase family. Glutamate--tRNA ligase type 1 subfamily.

The protein localises to the mitochondrion. It catalyses the reaction tRNA(Glu) + L-glutamate + ATP = L-glutamyl-tRNA(Glu) + AMP + diphosphate. Its function is as follows. Catalyzes the attachment of glutamate to tRNA(Glu) in a two-step reaction: glutamate is first activated by ATP to form Glu-AMP and then transferred to the acceptor end of tRNA(Glu). The polypeptide is Glutamate--tRNA ligase, mitochondrial (mse1) (Schizosaccharomyces pombe (strain 972 / ATCC 24843) (Fission yeast)).